The primary structure comprises 809 residues: Glycerol-3-phosphate acyltransferase (809 aa).

The HXXXXD motif signature appears at 306–311 (HRSHMD).

Belongs to the GPAT/DAPAT family.

The protein localises to the cell inner membrane. The enzyme catalyses sn-glycerol 3-phosphate + an acyl-CoA = a 1-acyl-sn-glycero-3-phosphate + CoA. The protein operates within phospholipid metabolism; CDP-diacylglycerol biosynthesis; CDP-diacylglycerol from sn-glycerol 3-phosphate: step 1/3. The polypeptide is Glycerol-3-phosphate acyltransferase (Vibrio vulnificus (strain YJ016)).